Here is a 142-residue protein sequence, read N- to C-terminus: ATP synthase epsilon chain (142 aa).

This sequence belongs to the ATPase epsilon chain family. F-type ATPases have 2 components, CF(1) - the catalytic core - and CF(0) - the membrane proton channel. CF(1) has five subunits: alpha(3), beta(3), gamma(1), delta(1), epsilon(1). CF(0) has three main subunits: a, b and c.

It localises to the cell inner membrane. Its function is as follows. Produces ATP from ADP in the presence of a proton gradient across the membrane. This is ATP synthase epsilon chain from Shewanella denitrificans (strain OS217 / ATCC BAA-1090 / DSM 15013).